We begin with the raw amino-acid sequence, 462 residues long: Cysteine--tRNA ligase (462 aa).

Cys-28 provides a ligand contact to Zn(2+). The short motif at 30–40 (VTAYDLCHIGH) is the 'HIGH' region element. Positions 209, 234, and 238 each coordinate Zn(2+). The 'KMSKS' region signature appears at 266-270 (KMSKS). Lys-269 contributes to the ATP binding site.

This sequence belongs to the class-I aminoacyl-tRNA synthetase family. In terms of assembly, monomer. The cofactor is Zn(2+).

The protein resides in the cytoplasm. The enzyme catalyses tRNA(Cys) + L-cysteine + ATP = L-cysteinyl-tRNA(Cys) + AMP + diphosphate. In Baumannia cicadellinicola subsp. Homalodisca coagulata, this protein is Cysteine--tRNA ligase.